A 990-amino-acid chain; its full sequence is Mediator of RNA polymerase II transcription subunit 5 (990 aa).

This sequence belongs to the Mediator complex subunit 5 family. As to quaternary structure, component of the Mediator complex.

It is found in the nucleus. Component of the Mediator complex, a coactivator involved in the regulated transcription of nearly all RNA polymerase II-dependent genes. Mediator functions as a bridge to convey information from gene-specific regulatory proteins to the basal RNA polymerase II transcription machinery. Mediator is recruited to promoters by direct interactions with regulatory proteins and serves as a scaffold for the assembly of a functional preinitiation complex with RNA polymerase II and the general transcription factors. The polypeptide is Mediator of RNA polymerase II transcription subunit 5 (NUT1) (Debaryomyces hansenii (strain ATCC 36239 / CBS 767 / BCRC 21394 / JCM 1990 / NBRC 0083 / IGC 2968) (Yeast)).